Consider the following 489-residue polypeptide: Probable capsid protein (489 aa).

Basic and acidic residues predominate over residues 87 to 101 (RMERGESSETKREQQ). The disordered stretch occupies residues 87-111 (RMERGESSETKREQQDLGATRKRKI). Positions 107–110 (RKRK) match the Nuclear localization signal motif. The segment at 409–426 (CRCWICTEEGHYANECPN) adopts a CCHC-type zinc-finger fold. The interval 466-489 (ETTSEEESTTDSDSSSSDDEQLSF) is disordered.

The protein belongs to the caulimoviridae capsid protein family. In terms of assembly, interacts (via nuclear localization signal) with host importin alpha.

It localises to the virion. The protein localises to the host nucleus. Its function is as follows. Self assembles to form an icosahedral capsid, about 50 nm in diameter, nm, composed of 420 subunits of the viral capsid protein. The capsid encapsulates the genomic dsDNA. Following virus entry into host cell, provides nuclear import of the viral genome. Virus particles do not enter the nucleus, but dock at the nuclear membrane through the interaction with host importins. The sequence is that of Probable capsid protein from Scrophularia californica (California bee plant).